A 217-amino-acid chain; its full sequence is HTH-type transcriptional regulator EthR (217 aa).

Residues 1–22 form a disordered region; it reads MTTASQTRTPRGRRSARPSGDD. An HTH tetR-type domain is found at 21–81; the sequence is DDREAAILAT…SLIDPLIKRA (61 aa). Residues 44-63 constitute a DNA-binding region (H-T-H motif); that stretch reads SVDDLAKGAGISRPTFYFYF.

In terms of assembly, homodimer.

In terms of biological role, involved in the repression of teh monooxygenase EthA which is responsible of the formation of the active metabolite of ethionamide (ETH). The polypeptide is HTH-type transcriptional regulator EthR (ethR) (Mycolicibacterium smegmatis (strain ATCC 700084 / mc(2)155) (Mycobacterium smegmatis)).